The following is a 359-amino-acid chain: 3-dehydroquinate synthase (359 aa).

NAD(+) contacts are provided by residues 71 to 76, 105 to 109, 129 to 130, K142, K151, and 169 to 172; these read DGEQYK, GVIGD, TT, and CLST. Zn(2+) is bound by residues E184, H247, and H264.

It belongs to the sugar phosphate cyclases superfamily. Dehydroquinate synthase family. Co(2+) serves as cofactor. Zn(2+) is required as a cofactor. Requires NAD(+) as cofactor.

Its subcellular location is the cytoplasm. It catalyses the reaction 7-phospho-2-dehydro-3-deoxy-D-arabino-heptonate = 3-dehydroquinate + phosphate. It functions in the pathway metabolic intermediate biosynthesis; chorismate biosynthesis; chorismate from D-erythrose 4-phosphate and phosphoenolpyruvate: step 2/7. Functionally, catalyzes the conversion of 3-deoxy-D-arabino-heptulosonate 7-phosphate (DAHP) to dehydroquinate (DHQ). This is 3-dehydroquinate synthase from Shewanella piezotolerans (strain WP3 / JCM 13877).